The following is a 139-amino-acid chain: Transmembrane protein 250 (139 aa).

The next 2 helical transmembrane spans lie at 56–76 (FLLY…LAAL) and 116–136 (VYGI…FMVF).

In terms of assembly, (Microbial infection) Interacts with herpes simplex virus 1/HHV-1 protein CVC2/UL25.

The protein localises to the membrane. It localises to the nucleus. Its subcellular location is the cytoplasm. May play a role in cell proliferation by promoting progression into S phase. In terms of biological role, (Microbial infection) Promotes human herpes simplex virus 1/HHV-1 proliferation. In Homo sapiens (Human), this protein is Transmembrane protein 250.